Here is an 83-residue protein sequence, read N- to C-terminus: MVVIRLARGGAKKRPFYNIVAADSRNRRDGRFIERVGFYNPMAAESEKGLVVNAERLEYWKQHGAQLSPTVLRLAKQAAKAAA.

This sequence belongs to the bacterial ribosomal protein bS16 family.

This is Small ribosomal subunit protein bS16 from Aromatoleum aromaticum (strain DSM 19018 / LMG 30748 / EbN1) (Azoarcus sp. (strain EbN1)).